Here is a 125-residue protein sequence, read N- to C-terminus: Larval cuticle protein LCP-14 (125 aa).

A signal peptide spans 1-16; the sequence is MKSFIVALCVVGCVLA. In terms of domain architecture, Chitin-binding type R&amp;R spans 33–102; it reads EGSYNYAFES…PQADFLPTPP (70 aa).

Functionally, component of the cuticle of the larva of tobacco hornworm. The sequence is that of Larval cuticle protein LCP-14 (LCP-14) from Manduca sexta (Tobacco hawkmoth).